Here is a 651-residue protein sequence, read N- to C-terminus: Altered inheritance of mitochondria protein 21 (651 aa).

Positions 1-85 (MPSEVTPKVP…LQRPVRRSTT (85 aa)) are disordered. The segment covering 9–19 (VPERPSRRKTS) has biased composition (basic and acidic residues). T18 carries the phosphothreonine modification. S36 carries the phosphoserine modification. The residue at position 58 (T58) is a Phosphothreonine. S70 bears the Phosphoserine mark. A Phosphothreonine modification is found at T85. Phosphoserine is present on S104. Residues 110–119 (NIHNVSRKKS) show a composition bias toward basic residues. Disordered stretches follow at residues 110-522 (NIHN…EKIE) and 549-651 (IDTT…FHSL). Polar residues-rich tracts occupy residues 133–149 (QNGQ…TNPS) and 164–178 (SAIS…SNNE). Residues 179–213 (VTEHSDSEDLTEKQKVHAALDNEAGDRSHFEEKLI) are compositionally biased toward basic and acidic residues. Phosphoserine occurs at positions 183, 206, and 231. The segment covering 243-272 (SDDKAEKFTKHPESSLEELQKHQEQQEEKI) has biased composition (basic and acidic residues). Residue T277 is modified to Phosphothreonine. Phosphoserine is present on S284. A compositionally biased stretch (polar residues) spans 296–323 (EVNSQPQGPSDTETVIAATSSNVPSQIA). S324 bears the Phosphoserine mark. Composition is skewed to basic and acidic residues over residues 339–361 (KKDF…RVSE) and 372–383 (EESKIPKIPSER). An interaction with SH3 domain of ABP1 region spans residues 383 to 396 (RPKRRAPPPVPKKP). Composition is skewed to polar residues over residues 414–427 (DLHN…TTAS) and 437–452 (SSIT…TSKL). Basic and acidic residues predominate over residues 471–482 (LEKKLSSPDTES). Residues 501–512 (RRGRGPRGRKLP) are compositionally biased toward basic residues. T552 carries the post-translational modification Phosphothreonine. Residues 556-567 (QAERALDEKEKL) show a composition bias toward basic and acidic residues. Over residues 575-586 (PLSQLPQTNTVG) the composition is skewed to polar residues. S592, S595, S597, S599, S639, S643, S647, and S650 each carry phosphoserine. Polar residues predominate over residues 594–605 (ESLSPSEAITNR). A compositionally biased stretch (basic and acidic residues) spans 639-651 (SALHSEEASFHSL).

Belongs to the AIM21 family. In terms of assembly, interacts with ribosomes. Interacts with ABP1.

It is found in the cytoplasm. The protein localises to the cytoskeleton. Its subcellular location is the actin patch. Its function is as follows. Involved in mitochondrial migration along actin filaments. In Saccharomyces cerevisiae (strain RM11-1a) (Baker's yeast), this protein is Altered inheritance of mitochondria protein 21 (AIM21).